The sequence spans 27 residues: Natriuretic peptides A (27 aa).

C7 and C23 are joined by a disulfide.

Belongs to the natriuretic peptide family.

It localises to the secreted. In terms of biological role, hormone playing a key role in cardiovascular homeostasis through regulation of natriuresis, diuresis, and vasodilation. Has a cGMP-stimulating activity. This chain is Natriuretic peptides A (nppa), found in Anguilla japonica (Japanese eel).